Reading from the N-terminus, the 482-residue chain is Chromosomal replication initiator protein DnaA (482 aa).

A domain I, interacts with DnaA modulators region spans residues 1–71 (MKQSILFERV…TGLFQAEDPE (71 aa)). The segment at 71–139 (EILKIEVLVR…ASFGSPLFGS (69 aa)) is domain II. The segment at 140–362 (PLDSRFTFDT…GAFNQLVFRR (223 aa)) is domain III, AAA+ region. Positions 186, 188, 189, and 190 each coordinate ATP. The tract at residues 363 to 482 (SFEPNLSIER…VELLKRLINE (120 aa)) is domain IV, binds dsDNA.

Belongs to the DnaA family. As to quaternary structure, oligomerizes as a right-handed, spiral filament on DNA at oriC.

The protein resides in the cytoplasm. In terms of biological role, plays an essential role in the initiation and regulation of chromosomal replication. ATP-DnaA binds to the origin of replication (oriC) to initiate formation of the DNA replication initiation complex once per cell cycle. Binds the DnaA box (a 9 base pair repeat at the origin) and separates the double-stranded (ds)DNA. Forms a right-handed helical filament on oriC DNA; dsDNA binds to the exterior of the filament while single-stranded (ss)DNA is stabiized in the filament's interior. The ATP-DnaA-oriC complex binds and stabilizes one strand of the AT-rich DNA unwinding element (DUE), permitting loading of DNA polymerase. After initiation quickly degrades to an ADP-DnaA complex that is not apt for DNA replication. Binds acidic phospholipids. The protein is Chromosomal replication initiator protein DnaA of Rhizobium johnstonii (strain DSM 114642 / LMG 32736 / 3841) (Rhizobium leguminosarum bv. viciae).